The chain runs to 720 residues: Putative fatty acid oxidation complex trifunctional enzyme (720 aa).

A 3-hydroxyacyl-CoA dehydrogenase region spans residues 1 to 384 (MQNEIKKVCV…SWHYGPFELL (384 aa)). The tract at residues 453 to 720 (FVITTKMNSL…TIEKLQAIVG (268 aa)) is enoyl-CoA hydratase/isomerase.

It in the N-terminal section; belongs to the 3-hydroxyacyl-CoA dehydrogenase family. The protein in the C-terminal section; belongs to the enoyl-CoA hydratase/isomerase family.

The catalysed reaction is a (3S)-3-hydroxyacyl-CoA + NAD(+) = a 3-oxoacyl-CoA + NADH + H(+). The enzyme catalyses a (3S)-3-hydroxyacyl-CoA = a (2E)-enoyl-CoA + H2O. It catalyses the reaction a 4-saturated-(3S)-3-hydroxyacyl-CoA = a (3E)-enoyl-CoA + H2O. It carries out the reaction a (3Z)-enoyl-CoA = a 4-saturated (2E)-enoyl-CoA. The catalysed reaction is a (3E)-enoyl-CoA = a 4-saturated (2E)-enoyl-CoA. The protein is Putative fatty acid oxidation complex trifunctional enzyme of Rickettsia prowazekii (strain Madrid E).